The sequence spans 63 residues: Large ribosomal subunit protein uL29 (63 aa).

It belongs to the universal ribosomal protein uL29 family.

This chain is Large ribosomal subunit protein uL29, found in Aeromonas salmonicida (strain A449).